The sequence spans 400 residues: Probable tRNA sulfurtransferase (400 aa).

The THUMP domain occupies 60-164 (EPIIEKLKNV…KEATYITSGT (105 aa)). ATP-binding positions include 182–183 (LL), 207–208 (HF), R264, G286, and Q295.

Belongs to the ThiI family.

It localises to the cytoplasm. It catalyses the reaction [ThiI sulfur-carrier protein]-S-sulfanyl-L-cysteine + a uridine in tRNA + 2 reduced [2Fe-2S]-[ferredoxin] + ATP + H(+) = [ThiI sulfur-carrier protein]-L-cysteine + a 4-thiouridine in tRNA + 2 oxidized [2Fe-2S]-[ferredoxin] + AMP + diphosphate. The enzyme catalyses [ThiS sulfur-carrier protein]-C-terminal Gly-Gly-AMP + S-sulfanyl-L-cysteinyl-[cysteine desulfurase] + AH2 = [ThiS sulfur-carrier protein]-C-terminal-Gly-aminoethanethioate + L-cysteinyl-[cysteine desulfurase] + A + AMP + 2 H(+). It participates in cofactor biosynthesis; thiamine diphosphate biosynthesis. In terms of biological role, catalyzes the ATP-dependent transfer of a sulfur to tRNA to produce 4-thiouridine in position 8 of tRNAs, which functions as a near-UV photosensor. Also catalyzes the transfer of sulfur to the sulfur carrier protein ThiS, forming ThiS-thiocarboxylate. This is a step in the synthesis of thiazole, in the thiamine biosynthesis pathway. The sulfur is donated as persulfide by IscS. This chain is Probable tRNA sulfurtransferase, found in Oceanobacillus iheyensis (strain DSM 14371 / CIP 107618 / JCM 11309 / KCTC 3954 / HTE831).